The primary structure comprises 377 residues: Succinyl-diaminopimelate desuccinylase (377 aa).

H68 contacts Zn(2+). D70 is a catalytic residue. D101 contributes to the Zn(2+) binding site. Catalysis depends on E135, which acts as the Proton acceptor. Residues E136, E164, and H350 each contribute to the Zn(2+) site.

Belongs to the peptidase M20A family. DapE subfamily. Homodimer. Zn(2+) serves as cofactor. Requires Co(2+) as cofactor.

The enzyme catalyses N-succinyl-(2S,6S)-2,6-diaminopimelate + H2O = (2S,6S)-2,6-diaminopimelate + succinate. The protein operates within amino-acid biosynthesis; L-lysine biosynthesis via DAP pathway; LL-2,6-diaminopimelate from (S)-tetrahydrodipicolinate (succinylase route): step 3/3. In terms of biological role, catalyzes the hydrolysis of N-succinyl-L,L-diaminopimelic acid (SDAP), forming succinate and LL-2,6-diaminopimelate (DAP), an intermediate involved in the bacterial biosynthesis of lysine and meso-diaminopimelic acid, an essential component of bacterial cell walls. This chain is Succinyl-diaminopimelate desuccinylase, found in Aliivibrio salmonicida (strain LFI1238) (Vibrio salmonicida (strain LFI1238)).